The sequence spans 477 residues: uncharacterized protein (477 aa).

A helical membrane pass occupies residues 107–129 (VNFWSLSMACASVLALLGLVYLI).

It localises to the membrane. This is an uncharacterized protein from Treponema pallidum (strain Nichols).